The sequence spans 96 residues: Putative pterin-4-alpha-carbinolamine dehydratase (96 aa).

Belongs to the pterin-4-alpha-carbinolamine dehydratase family.

The enzyme catalyses (4aS,6R)-4a-hydroxy-L-erythro-5,6,7,8-tetrahydrobiopterin = (6R)-L-erythro-6,7-dihydrobiopterin + H2O. The protein is Putative pterin-4-alpha-carbinolamine dehydratase of Prochlorococcus marinus (strain MIT 9312).